A 441-amino-acid chain; its full sequence is Major capsid protein (441 aa).

Residues 1-51 (MSKKLVTEEMRTQWLPVLEKKSEQIQPLTAENVSVRLLQNQAEWNAKNLGE) constitute a propeptide that is removed on maturation.

It localises to the virion. This is Major capsid protein from Serratia marcescens (Serratia marcescens bacteriophage KSP90).